The chain runs to 338 residues: ATP synthase subunit a (338 aa).

A helical membrane pass occupies residues 15–35; that stretch reads IAVLVMPLLLGFGAPIYAAAE. Positions 45–66 are disordered; sequence AAAVHTDEAHGEAGEHAEGGHG. Residues 49 to 65 are compositionally biased toward basic and acidic residues; it reads HTDEAHGEAGEHAEGGH. A run of 7 helical transmembrane segments spans residues 109 to 129, 174 to 194, 199 to 219, 238 to 258, 262 to 282, 287 to 307, and 308 to 328; these read HVVF…YVGN, LLTV…PYGA, NINV…VSAI, ALWI…PFAL, LFAN…ISFI, IVAI…EIFV, and SFLQ…LGSA.

This sequence belongs to the ATPase A chain family. F-type ATPases have 2 components, CF(1) - the catalytic core - and CF(0) - the membrane proton channel. CF(1) has five subunits: alpha(3), beta(3), gamma(1), delta(1), epsilon(1). CF(0) has four main subunits: a, b, b' and c.

The protein resides in the cell inner membrane. Key component of the proton channel; it plays a direct role in the translocation of protons across the membrane. The protein is ATP synthase subunit a of Chlorobium phaeobacteroides (strain BS1).